The following is a 318-amino-acid chain: Ferrochelatase (318 aa).

Fe cation contacts are provided by His186 and Glu264.

Belongs to the ferrochelatase family.

The protein localises to the cytoplasm. It catalyses the reaction heme b + 2 H(+) = protoporphyrin IX + Fe(2+). It participates in porphyrin-containing compound metabolism; protoheme biosynthesis; protoheme from protoporphyrin-IX: step 1/1. Functionally, catalyzes the ferrous insertion into protoporphyrin IX. The polypeptide is Ferrochelatase (Chlamydia abortus (strain DSM 27085 / S26/3) (Chlamydophila abortus)).